Reading from the N-terminus, the 150-residue chain is Large ribosomal subunit protein bL9 (150 aa).

It belongs to the bacterial ribosomal protein bL9 family.

Binds to the 23S rRNA. This chain is Large ribosomal subunit protein bL9, found in Leuconostoc citreum (strain KM20).